Consider the following 362-residue polypeptide: Methylthioribose-1-phosphate isomerase (362 aa).

The Proton donor role is filled by aspartate 252.

It belongs to the eIF-2B alpha/beta/delta subunits family. MtnA subfamily.

The protein resides in the cytoplasm. Its subcellular location is the nucleus. It carries out the reaction 5-(methylsulfanyl)-alpha-D-ribose 1-phosphate = 5-(methylsulfanyl)-D-ribulose 1-phosphate. The protein operates within amino-acid biosynthesis; L-methionine biosynthesis via salvage pathway; L-methionine from S-methyl-5-thio-alpha-D-ribose 1-phosphate: step 1/6. In terms of biological role, catalyzes the interconversion of methylthioribose-1-phosphate (MTR-1-P) into methylthioribulose-1-phosphate (MTRu-1-P). The protein is Methylthioribose-1-phosphate isomerase of Drosophila mojavensis (Fruit fly).